The chain runs to 613 residues: Tetratricopeptide repeat protein 39A (613 aa).

TPR repeat units follow at residues 315–348, 505–538, and 546–579; these read AIFL…QQHW, CLVK…EKKI, and PNAL…YKNY.

This sequence belongs to the TTC39 family.

In Homo sapiens (Human), this protein is Tetratricopeptide repeat protein 39A (TTC39A).